The sequence spans 706 residues: G2/M phase-specific E3 ubiquitin-protein ligase (706 aa).

The C2HC pre-PHD-type zinc-finger motif lies at 11 to 51; sequence NLACVFCRKNDDCPNKYGEKKTKEKWNLTVHYYCLLMSSGI. Residues 79–128 form a PHD-type 1 zinc finger; the sequence is LKCCVCKKNGASIGCVAPRCKRSYHFPCGLQRECIFQFTGNFASFCWNHR. The segment at 143 to 193 adopts a PHD-type 2; degenerate zinc-finger fold; that stretch reads PCTICLEFIEPIPSYNILRSPCCKNAWFHRDCLQVQAINAGVFFFRCTICS. The PHD-type 3 zinc-finger motif lies at 237-286; sequence RCRCKEGRDYNAPDSKWEIKRCQCCGSSGTHLACSSLRSWEQNWECLECR. The region spanning 371–698 is the HECT domain; it reads IWTSALDAFR…IRNTLKLEKE (328 aa).

It localises to the nucleus. The protein resides in the nucleolus. It is found in the cytoplasm. It catalyses the reaction S-ubiquitinyl-[E2 ubiquitin-conjugating enzyme]-L-cysteine + [acceptor protein]-L-lysine = [E2 ubiquitin-conjugating enzyme]-L-cysteine + N(6)-ubiquitinyl-[acceptor protein]-L-lysine.. It participates in protein modification; protein ubiquitination. Functionally, E3 ubiquitin-protein ligase which accepts ubiquitin from an E2 ubiquitin-conjugating enzyme in the form of a thioester and then directly transfers the ubiquitin to targeted substrates. Essential in early embryonic development to prevent apoptotic death. The protein is G2/M phase-specific E3 ubiquitin-protein ligase (G2E3) of Macaca fascicularis (Crab-eating macaque).